Reading from the N-terminus, the 747-residue chain is Protein O-mannosyl-transferase 1 (747 aa).

Helical transmembrane passes span 30–50 (PLVV…LGLL), 90–110 (FGHM…NFLW), 121–141 (VPVW…VPMA), 176–196 (LLES…LKFF), 205–225 (SVHW…AVGI), 228–248 (MGIF…WHLI), and 267–287 (VALL…HLML). 3 MIR domains span residues 318–381 (PLEV…VKDP), 392–449 (PRPV…LDIV), and 453–513 (SNQD…VEEH). Residues Asn-435, Asn-471, and Asn-539 are each glycosylated (N-linked (GlcNAc...) asparagine). 3 helical membrane passes run 597–617 (IVIW…FFWY), 636–656 (WVLA…PFFL), and 660–680 (MLFL…LPIV).

Belongs to the glycosyltransferase 39 family.

The protein localises to the endoplasmic reticulum membrane. The catalysed reaction is a di-trans,poly-cis-dolichyl beta-D-mannosyl phosphate + L-seryl-[protein] = 3-O-(alpha-D-mannosyl)-L-seryl-[protein] + a di-trans,poly-cis-dolichyl phosphate + H(+). It catalyses the reaction a di-trans,poly-cis-dolichyl beta-D-mannosyl phosphate + L-threonyl-[protein] = 3-O-(alpha-D-mannosyl)-L-threonyl-[protein] + a di-trans,poly-cis-dolichyl phosphate + H(+). The protein operates within protein modification; protein glycosylation. Transfers mannosyl residues to the hydroxyl group of serine or threonine residues. Coexpression of both POMT1 and POMT2 is necessary for enzyme activity, expression of either POMT1 or POMT2 alone is insufficient. Essentially dedicated to O-mannosylation of alpha-DAG1 and few other proteins but not of cadherins and protocaherins. In Rattus norvegicus (Rat), this protein is Protein O-mannosyl-transferase 1 (Pomt1).